The following is a 291-amino-acid chain: METEYSKRVYQGVRVKHTVKDLLAEKRLRQTNTPRFSTSSSSSQPAFVPMPGSHVLPGYYSMRRSFLQDSELCHTVKQYSSDTYSSALGSKAFSYDHASTYPAFIDSYYTPDSYGDYRGPTSYTTSGGSLFPPSSLPTLLPTLSGESSSHLLLRDPWDQPSEDSVNQTEVLCPEAAAPVADSPSLAGPDSGSSSPYRLTSGRSGSSIPSSSQPYTLQPLEDVPYTAPSYTSASSYSCPPYMSTPGDLAVVKMTAVTSEEASGGVVSLSDTTSWAKDDGTGSWLSYETRRAF.

Positions 7–29 (KRVYQGVRVKHTVKDLLAEKRLR) constitute an OCA domain. A disordered region spans residues 176-219 (AAPVADSPSLAGPDSGSSSPYRLTSGRSGSSIPSSSQPYTLQPL). A compositionally biased stretch (low complexity) spans 200–211 (SGRSGSSIPSSS).

The protein belongs to the POU2AF family.

In terms of biological role, transcriptional coactivator that may regulate cell type-specific differentiation pathways. The protein is POU class 2 homeobox associating-factor 2 (pou2af2) of Danio rerio (Zebrafish).